We begin with the raw amino-acid sequence, 1149 residues long: Golgi apparatus protein 1 homolog (1149 aa).

The signal sequence occupies residues 1–19 (MWRFPLILASVCWLTTAQQ). Topologically, residues 20-1115 (QNVANDPDKK…NLVMEHPERN (1096 aa)) are extracellular. Cys-rich GLG1 repeat units lie at residues 24 to 69 (NDPD…FSET), 71 to 135 (TLSE…KNVT), 139 to 207 (KCHA…VKNA), 216 to 276 (ILGD…NDKF), 277 to 344 (MDPE…NQPE), 349 to 411 (QPSK…ESRN), 415 to 475 (KLGA…NVDS), 477 to 549 (DMVP…YDEQ), 551 to 610 (PLSV…ETDN), 613 to 676 (RKHP…DAKE), 677 to 736 (MNNK…FEHK), 743 to 803 (DLTD…IECL), 809 to 867 (HLGP…IVRL), 868 to 938 (LQRE…RQSI), 945 to 1009 (DFSP…NKGL), and 1010 to 1070 (IRDK…DKQE). Asparagine 133 carries N-linked (GlcNAc...) asparagine glycosylation. N-linked (GlcNAc...) asparagine glycosylation is present at asparagine 411. Residues 1116 to 1136 (SILGYLAGFIVFILLIGCCCG) traverse the membrane as a helical segment. Topologically, residues 1137-1149 (RVSKKQYIEMKNR) are cytoplasmic.

It is found in the membrane. In Caenorhabditis elegans, this protein is Golgi apparatus protein 1 homolog.